Consider the following 525-residue polypeptide: Light-independent protochlorophyllide reductase subunit B (525 aa).

Residue Asp36 participates in [4Fe-4S] cluster binding. Residue Asp286 is the Proton donor of the active site. 421-422 contacts substrate; that stretch reads GL.

It belongs to the ChlB/BchB/BchZ family. As to quaternary structure, protochlorophyllide reductase is composed of three subunits; ChlL, ChlN and ChlB. Forms a heterotetramer of two ChlB and two ChlN subunits. It depends on [4Fe-4S] cluster as a cofactor.

The catalysed reaction is chlorophyllide a + oxidized 2[4Fe-4S]-[ferredoxin] + 2 ADP + 2 phosphate = protochlorophyllide a + reduced 2[4Fe-4S]-[ferredoxin] + 2 ATP + 2 H2O. The protein operates within porphyrin-containing compound metabolism; chlorophyll biosynthesis (light-independent). Its function is as follows. Component of the dark-operative protochlorophyllide reductase (DPOR) that uses Mg-ATP and reduced ferredoxin to reduce ring D of protochlorophyllide (Pchlide) to form chlorophyllide a (Chlide). This reaction is light-independent. The NB-protein (ChlN-ChlB) is the catalytic component of the complex. This chain is Light-independent protochlorophyllide reductase subunit B, found in Prochlorococcus marinus (strain NATL2A).